The sequence spans 152 residues: Nucleoside diphosphate kinase (152 aa).

Positions 11, 59, 87, 93, 104, and 114 each coordinate ATP. The active-site Pros-phosphohistidine intermediate is His-117.

Belongs to the NDK family. As to quaternary structure, homotetramer. The cofactor is Mg(2+).

Its subcellular location is the cytoplasm. The enzyme catalyses a 2'-deoxyribonucleoside 5'-diphosphate + ATP = a 2'-deoxyribonucleoside 5'-triphosphate + ADP. It carries out the reaction a ribonucleoside 5'-diphosphate + ATP = a ribonucleoside 5'-triphosphate + ADP. Its function is as follows. Major role in the synthesis of nucleoside triphosphates other than ATP. The ATP gamma phosphate is transferred to the NDP beta phosphate via a ping-pong mechanism, using a phosphorylated active-site intermediate. The polypeptide is Nucleoside diphosphate kinase (Prochlorococcus marinus (strain MIT 9215)).